The primary structure comprises 377 residues: Anhydro-N-acetylmuramic acid kinase (377 aa).

12 to 19 (GTSLDGID) is an ATP binding site.

The protein belongs to the anhydro-N-acetylmuramic acid kinase family.

The catalysed reaction is 1,6-anhydro-N-acetyl-beta-muramate + ATP + H2O = N-acetyl-D-muramate 6-phosphate + ADP + H(+). It participates in amino-sugar metabolism; 1,6-anhydro-N-acetylmuramate degradation. It functions in the pathway cell wall biogenesis; peptidoglycan recycling. Catalyzes the specific phosphorylation of 1,6-anhydro-N-acetylmuramic acid (anhMurNAc) with the simultaneous cleavage of the 1,6-anhydro ring, generating MurNAc-6-P. Is required for the utilization of anhMurNAc either imported from the medium or derived from its own cell wall murein, and thus plays a role in cell wall recycling. The polypeptide is Anhydro-N-acetylmuramic acid kinase (Methylorubrum populi (strain ATCC BAA-705 / NCIMB 13946 / BJ001) (Methylobacterium populi)).